Here is a 247-residue protein sequence, read N- to C-terminus: O-methyltransferase imqG (247 aa).

S-adenosyl-L-methionine-binding positions include E84, 86-87, and A138; that span reads GT. A divalent metal cation-binding residues include D163, D189, and N190. D163 contacts substrate.

It belongs to the class I-like SAM-binding methyltransferase superfamily. Cation-dependent O-methyltransferase family. CCoAMT subfamily. As to quaternary structure, homodimer. The cofactor is a divalent metal cation.

The protein operates within secondary metabolite biosynthesis. O-methyltransferase; part of the gene cluster that mediates the biosynthesis of imizoquins A to D, tripeptide-derived alkaloids that serve a protective role against oxidative stress that are essential for normal germination. ImqB is a canonical three-module NRPS that assembles the tripeptide backbone of the imizoquins via condensation of Trp, Tyr, and Leu-derived precursors. N-methylation by imqF and phenol oxidation by imqC, followed by cyclization via the FAD-dependent oxidase imqH carry out the three-step transformation of L-tyrosine into tetrahydroisoquinoline. Importantly, this sequence requires the presence of a free amine in the tyrosine moiety, indicating that isoquinoline formation occurs prior to peptide bond formation. The imidazolidin-4-one ring of imizoquins could form following additional oxidation of the methyl-derived bridgehead carbon by imqH. Lastly, O-methylation by imqG and leucine hydroxylation by imqE complete biosynthesis of the imizoquins. This is O-methyltransferase imqG from Aspergillus flavus (strain ATCC 200026 / FGSC A1120 / IAM 13836 / NRRL 3357 / JCM 12722 / SRRC 167).